Reading from the N-terminus, the 284-residue chain is Phosphatidylserine decarboxylase proenzyme (284 aa).

Active-site charge relay system; for autoendoproteolytic cleavage activity residues include aspartate 88, histidine 145, and serine 251. The Schiff-base intermediate with substrate; via pyruvic acid; for decarboxylase activity role is filled by serine 251. Serine 251 carries the post-translational modification Pyruvic acid (Ser); by autocatalysis.

Belongs to the phosphatidylserine decarboxylase family. PSD-B subfamily. Prokaryotic type I sub-subfamily. As to quaternary structure, heterodimer of a large membrane-associated beta subunit and a small pyruvoyl-containing alpha subunit. It depends on pyruvate as a cofactor. In terms of processing, is synthesized initially as an inactive proenzyme. Formation of the active enzyme involves a self-maturation process in which the active site pyruvoyl group is generated from an internal serine residue via an autocatalytic post-translational modification. Two non-identical subunits are generated from the proenzyme in this reaction, and the pyruvate is formed at the N-terminus of the alpha chain, which is derived from the carboxyl end of the proenzyme. The autoendoproteolytic cleavage occurs by a canonical serine protease mechanism, in which the side chain hydroxyl group of the serine supplies its oxygen atom to form the C-terminus of the beta chain, while the remainder of the serine residue undergoes an oxidative deamination to produce ammonia and the pyruvoyl prosthetic group on the alpha chain. During this reaction, the Ser that is part of the protease active site of the proenzyme becomes the pyruvoyl prosthetic group, which constitutes an essential element of the active site of the mature decarboxylase.

The protein resides in the cell membrane. The catalysed reaction is a 1,2-diacyl-sn-glycero-3-phospho-L-serine + H(+) = a 1,2-diacyl-sn-glycero-3-phosphoethanolamine + CO2. Its pathway is phospholipid metabolism; phosphatidylethanolamine biosynthesis; phosphatidylethanolamine from CDP-diacylglycerol: step 2/2. Its function is as follows. Catalyzes the formation of phosphatidylethanolamine (PtdEtn) from phosphatidylserine (PtdSer). This is Phosphatidylserine decarboxylase proenzyme from Polaromonas sp. (strain JS666 / ATCC BAA-500).